Here is a 365-residue protein sequence, read N- to C-terminus: Autoinducer 2-binding periplasmic protein LuxP (365 aa).

The first 23 residues, 1–23 (MKKALLFSLISMVGFSPASQATQ), serve as a signal peptide directing secretion.

This sequence belongs to the bacterial solute-binding protein 2 family.

It localises to the periplasm. Binds to the signaling molecule autoinducer 2 (AI-2), a furanosyl borate diester, (3a-methyl-5,6-dihydrofuro-[2,3d][1,3,2]dioxaborole-2,2,6,6a-tetraol). This complex then interacts with the LuxQ sensor protein. This Vibrio harveyi (Beneckea harveyi) protein is Autoinducer 2-binding periplasmic protein LuxP (luxP).